Consider the following 369-residue polypeptide: MSTGLRYKSKLATPEDKQDIDKQYVGFATLPNQVHRKSVKKGFDFTLMVAGESGLGKSTLVHSLFLTDLYKDRKLLSAEERISQTVEILKHTVDIEEKGVKLKLTIVDTPGFGDAVNNTECWKPITDYVDQQFEQYFRDESGLNRKNIQDNRVHCCLYFISPFGHGLRPVDVGFMKALHEKVNIVPLIAKADCLVPSEIRKLKERIREEIDKFGIHVYQFPECDSDEDEDFKQQDRELKESAPFAVIGSNTVVEAKGQRVRGRLYPWGIVEVENQAHCDFVKLRNMLIRTHMHDLKDVTCDVHYENYRAHCIQQMTSKLTQDSRMESPIPILPLPTPDAETEKLIRMKDEELRRMQEMLQRMKQQMQDQ.

A Phosphothreonine modification is found at Thr-13. One can recognise a Septin-type G domain in the interval 41 to 314; that stretch reads KGFDFTLMVA…ENYRAHCIQQ (274 aa). The G1 motif stretch occupies residues 51–58; it reads GESGLGKS. Residues 51 to 58, Thr-85, and Gly-111 each bind GTP; that span reads GESGLGKS. The G3 motif stretch occupies residues 108-111; it reads DTPG. Arg-168 is modified (omega-N-methylarginine). The tract at residues 189–192 is G4 motif; the sequence is AKAD. 190 to 198 contacts GTP; the sequence is KADCLVPSE. A Phosphoserine modification is found at Ser-225. The GTP site is built by Gly-248 and Arg-263. Ser-327 carries the phosphoserine modification. At Thr-336 the chain carries Phosphothreonine. Positions 338-369 form a coiled coil; that stretch reads DAETEKLIRMKDEELRRMQEMLQRMKQQMQDQ.

Belongs to the TRAFAC class TrmE-Era-EngA-EngB-Septin-like GTPase superfamily. Septin GTPase family. As to quaternary structure, septins polymerize into heterooligomeric protein complexes that form filaments, and can associate with cellular membranes, actin filaments and microtubules. GTPase activity is required for filament formation. Interacts with SEPTIN2 and SEPTIN5. In platelets, associated with a complex containing STX4. Interacts with PRKN; this interaction leads to SEPTIN5 ubiquitination and degradation. Interacts with DYRK1A. Interacts with STX1A; in the cerebellar cortex. Post-translationally, phosphorylated by DYRK1A. In platelets, phosphorylated in response to thrombin, phorbol-12-myristate-13-acetate and collagen. Expressed at high levels in the CNS, as well as in heart and platelets (at protein level).

The protein localises to the cytoplasm. Its subcellular location is the cytoskeleton. Its function is as follows. Filament-forming cytoskeletal GTPase. May play a role in cytokinesis (Potential). May play a role in platelet secretion. This is Septin-5 from Homo sapiens (Human).